A 642-amino-acid chain; its full sequence is MVYKEVQERVRLALRQALDEMLHEAGKEWDGEITFDDTPSIELGDFGTAVSFQLARVFRKAPKFIAEELVGRVKEKLPEEIRDVKAVNGYINFYLDYEFFGKALVREILEKGEKYGESELGSGKKVIVEHTSVNPTKPLHMGHARNAVLGDTMARIMRKLGYTVEVQNYIDDLGVQFAQVLWGYLNLKEEFERIEAELREKGLKEDFIDHVMGLLYVEVNKKLEENPEVDKEVRELMKKLEEGDNEIAEVGRKLAERVVRAQMLTTYRMGITYDLLSWESDIMKSGIFGEAYGLIEKNENFFWATEGKYKGAFVMDLRKLFPDMKNPFLVLRRSDGTATYTGKDIAYHLWKFGKVKADMLYKLWDRVEDHETWTTAPDGKEMPGKFGRADIVINVIGAEQKHPQMAIKYALQLLGFEDAAENFHHLAYEHVVRPEGSFSGRKGTWVGFTVDEVLNEAVQRARELVEQKNPNLSDEEKDEIAEAVGVGAVRYNLVKYSPDKVITFRWEDVLNFEGDSAPYLQYAHARCASILRKAEESGVETDWNALLEKADFSKLTNREKELIKFLAKFPEVLESAGRDVKPHLVPAYLNELASLFNRFYMDHPVLKAEEGIREERLLLVLAVKQVLRNGLDVLGIKAPERM.

Positions 133 to 143 (VNPTKPLHMGH) match the 'HIGH' region motif.

Belongs to the class-I aminoacyl-tRNA synthetase family.

The protein resides in the cytoplasm. The catalysed reaction is tRNA(Arg) + L-arginine + ATP = L-arginyl-tRNA(Arg) + AMP + diphosphate. In Thermococcus kodakarensis (strain ATCC BAA-918 / JCM 12380 / KOD1) (Pyrococcus kodakaraensis (strain KOD1)), this protein is Arginine--tRNA ligase.